Reading from the N-terminus, the 394-residue chain is Elongation factor Tu (394 aa).

The tr-type G domain occupies 10–204 (KPHINVGTIG…SLDKYIPIPV (195 aa)). The G1 stretch occupies residues 19–26 (GHVDHGKT). Residue 19-26 (GHVDHGKT) coordinates GTP. Thr26 provides a ligand contact to Mg(2+). The G2 stretch occupies residues 60–64 (GITIN). Positions 81–84 (DCPG) are G3. Residues 81–85 (DCPGH) and 136–139 (NKCD) each bind GTP. The tract at residues 136-139 (NKCD) is G4. Residues 174–176 (SAL) form a G5 region.

Belongs to the TRAFAC class translation factor GTPase superfamily. Classic translation factor GTPase family. EF-Tu/EF-1A subfamily. In terms of assembly, monomer.

The protein resides in the cytoplasm. The catalysed reaction is GTP + H2O = GDP + phosphate + H(+). GTP hydrolase that promotes the GTP-dependent binding of aminoacyl-tRNA to the A-site of ribosomes during protein biosynthesis. The sequence is that of Elongation factor Tu from Buchnera aphidicola subsp. Cinara cedri (strain Cc).